Here is a 446-residue protein sequence, read N- to C-terminus: Rhamnogalacturonase A (446 aa).

The N-terminal stretch at 1–18 (MPALPILALALAPLLVNG) is a signal peptide. Cys-39 and Cys-65 form a disulfide bridge. Asn-50, Asn-115, and Asn-124 each carry an N-linked (GlcNAc...) asparagine glycan. The active-site Proton donor is the Asp-216. Cys-218 and Cys-235 are disulfide-bonded. Asn-236, Asn-281, and Asn-318 each carry an N-linked (GlcNAc...) asparagine glycan. Disulfide bonds link Cys-341/Cys-347 and Cys-369/Cys-378.

The protein belongs to the glycosyl hydrolase 28 family.

The protein resides in the secreted. The catalysed reaction is Endohydrolysis of alpha-D-GalA-(1-&gt;2)-alpha-L-Rha glycosidic bond in the rhamnogalacturonan I backbone with initial inversion of anomeric configuration releasing oligosaccharides with beta-D-GalA at the reducing end.. In terms of biological role, pectinolytic enzymes consist of four classes of enzymes: pectine lyase, polygalacturonase, pectin methylesterase and rhamnogalacturonase. Hydrolyzes alpha-D-galacturonopyranosyl-(1,2)-alpha-L-rhamnopyranosyl linkages in the backbone of the hairy regions of pectins. This chain is Rhamnogalacturonase A (rhgA), found in Aspergillus niger.